Consider the following 169-residue polypeptide: S-ribosylhomocysteine lyase (169 aa).

Positions 54, 58, and 128 each coordinate Fe cation.

This sequence belongs to the LuxS family. In terms of assembly, homodimer. The cofactor is Fe cation.

It carries out the reaction S-(5-deoxy-D-ribos-5-yl)-L-homocysteine = (S)-4,5-dihydroxypentane-2,3-dione + L-homocysteine. Involved in the synthesis of autoinducer 2 (AI-2) which is secreted by bacteria and is used to communicate both the cell density and the metabolic potential of the environment. The regulation of gene expression in response to changes in cell density is called quorum sensing. Catalyzes the transformation of S-ribosylhomocysteine (RHC) to homocysteine (HC) and 4,5-dihydroxy-2,3-pentadione (DPD). This is S-ribosylhomocysteine lyase from Shewanella piezotolerans (strain WP3 / JCM 13877).